A 126-amino-acid chain; its full sequence is Adult-specific rigid cuticular protein 12.4 (126 aa).

Residues Gly9–Pro87 form the Chitin-binding type R&amp;R domain.

Its function is as follows. Component of the rigid cuticle of the spider. The protein is Adult-specific rigid cuticular protein 12.4 of Araneus diadematus (European garden spider).